The primary structure comprises 921 residues: Protein translocase subunit SecA (921 aa).

Residues Q87, 105–109 (GEGKT), and D501 each bind ATP. The segment at 831–886 (PFPVINTETSGPSEEPAGLFSQGTTGGDIPAPQPMAGFPSAAPMPPRPQPVPTGAE) is disordered. The segment covering 872-881 (APMPPRPQPV) has biased composition (pro residues). Residues C905, C907, C916, and H917 each contribute to the Zn(2+) site.

Belongs to the SecA family. As to quaternary structure, monomer and homodimer. Part of the essential Sec protein translocation apparatus which comprises SecA, SecYEG and auxiliary proteins SecDF-YajC and YidC. It depends on Zn(2+) as a cofactor.

The protein localises to the cell inner membrane. The protein resides in the cytoplasm. It catalyses the reaction ATP + H2O + cellular proteinSide 1 = ADP + phosphate + cellular proteinSide 2.. In terms of biological role, part of the Sec protein translocase complex. Interacts with the SecYEG preprotein conducting channel. Has a central role in coupling the hydrolysis of ATP to the transfer of proteins into and across the cell membrane, serving both as a receptor for the preprotein-SecB complex and as an ATP-driven molecular motor driving the stepwise translocation of polypeptide chains across the membrane. This chain is Protein translocase subunit SecA, found in Gluconobacter oxydans (strain 621H) (Gluconobacter suboxydans).